We begin with the raw amino-acid sequence, 166 residues long: AP-3 complex subunit sigma (166 aa).

This sequence belongs to the adaptor complexes small subunit family. Adaptor protein complex 3 (AP-3) is a heterotetramer composed of two large adaptins (delta-type subunit and beta-type subunit), a medium adaptin (mu-type subunit) and a small adaptin (sigma-type subunit).

Its subcellular location is the cytoplasm. The protein localises to the golgi apparatus. It localises to the cytoplasmic vesicle membrane. In terms of biological role, part of the AP-3 complex, an adaptor-related complex which seems to be clathrin-associated. The complex is associated with the Golgi region as well as more peripheral structures. It facilitates the budding of vesicles from the Golgi membrane and may be directly involved in trafficking to the vacuole. It also function in maintaining the identity of lytic vacuoles and in regulating the transition between storage and lytic vacuoles. This chain is AP-3 complex subunit sigma, found in Arabidopsis thaliana (Mouse-ear cress).